Consider the following 318-residue polypeptide: 2-methyl-6-phytyl-1,4-hydroquinone methyltransferase (318 aa).

The signal sequence occupies residues 1-39 (MPEYLLLPAGLISLSLAIAAGLYLLTARGYQSSDSVANA). Residues 97-106 (VLDVGCGIGG) are SAM motif I. The SAM motif II stretch occupies residues 157 to 165 (GSFDVVWSV). The interval 184–193 (VVKPGGILVV) is SAM motif III.

Belongs to the class I-like SAM-binding methyltransferase superfamily. gTMT family.

The catalysed reaction is 2-methyl-6-phytyl-1,4-benzene-1,4-diol + S-adenosyl-L-methionine = 2,3-dimethyl-6-phytylbenzene-1,4-diol + S-adenosyl-L-homocysteine + H(+). It carries out the reaction 2-methyl-6-(all-trans-nonaprenyl)benzene-1,4-diol + S-adenosyl-L-methionine = plastoquinol-9 + S-adenosyl-L-homocysteine + H(+). It catalyses the reaction 6-geranylgeranyl-2-methylbenzene-1,4-diol + S-adenosyl-L-methionine = 6-geranylgeranyl-2,3-dimethylbenzene-1,4-diol + S-adenosyl-L-homocysteine + H(+). Its pathway is cofactor biosynthesis; tocopherol biosynthesis. Involved in a key methylation step in both tocopherol (vitamin E) and plastoquinone synthesis. Catalyzes the conversion of 2-methyl-6-phytyl-1,4-hydroquinol (MPBQ) to 2,3-dimethyl-6-phytyl-1,4-hydroquinol (DMPQ, a substrate for tocopherol cyclase), and 2-methyl-6-solanyl-1,4-benzoquinol (MSBQ) to plastoquinol. The chain is 2-methyl-6-phytyl-1,4-hydroquinone methyltransferase from Synechocystis sp. (strain ATCC 27184 / PCC 6803 / Kazusa).